The following is a 309-amino-acid chain: tRNA dimethylallyltransferase (309 aa).

11–18 (GPTASGKS) serves as a coordination point for ATP. 13 to 18 (TASGKS) contributes to the substrate binding site. 2 interaction with substrate tRNA regions span residues 36 to 39 (DSMQ) and 160 to 164 (QRLIR).

Belongs to the IPP transferase family. As to quaternary structure, monomer. Mg(2+) serves as cofactor.

It carries out the reaction adenosine(37) in tRNA + dimethylallyl diphosphate = N(6)-dimethylallyladenosine(37) in tRNA + diphosphate. In terms of biological role, catalyzes the transfer of a dimethylallyl group onto the adenine at position 37 in tRNAs that read codons beginning with uridine, leading to the formation of N6-(dimethylallyl)adenosine (i(6)A). The chain is tRNA dimethylallyltransferase from Rickettsia felis (strain ATCC VR-1525 / URRWXCal2) (Rickettsia azadi).